The primary structure comprises 201 residues: 3-isopropylmalate dehydratase small subunit (201 aa).

Belongs to the LeuD family. LeuD type 1 subfamily. As to quaternary structure, heterodimer of LeuC and LeuD.

It carries out the reaction (2R,3S)-3-isopropylmalate = (2S)-2-isopropylmalate. It functions in the pathway amino-acid biosynthesis; L-leucine biosynthesis; L-leucine from 3-methyl-2-oxobutanoate: step 2/4. In terms of biological role, catalyzes the isomerization between 2-isopropylmalate and 3-isopropylmalate, via the formation of 2-isopropylmaleate. The protein is 3-isopropylmalate dehydratase small subunit of Paramagnetospirillum magneticum (strain ATCC 700264 / AMB-1) (Magnetospirillum magneticum).